The primary structure comprises 132 residues: Sodium/calcium exchanger regulatory protein 1 (132 aa).

(9Z)-hexadecenoate is bound by residues arginine 126 and tyrosine 128.

Belongs to the calycin superfamily. Fatty-acid binding protein (FABP) family. As to quaternary structure, interacts with Na(+)/Ca(2+) exchanger NCXSQ1; ReP1-NCXSQ phosphorylation does not affect the interaction. Post-translationally, phosphorylated. Phosphorylation may result in the release of the bound fatty acid. As to expression, expressed in the optic nerve (at protein level).

The protein resides in the cytoplasm. The protein localises to the membrane. In terms of biological role, binds and may transport fatty acids such as palmitoleate. Also binds poly-phosphoinositides including phosphatidylinositol 4-phosphate (PtdIns(4)P), phosphatidylinositol 4,5-bisphosphate (PtdIns(4,5)P2) and phosphatidylinositol 3,4,5-trisphosphate (PtdIns(3,4,5)P3), and phosphatidic acid. When phosphorylated, stimulates the activity of optic nerve Na(+)/Ca(2+) exchanger. This chain is Sodium/calcium exchanger regulatory protein 1, found in Doryteuthis pealeii (Longfin inshore squid).